The chain runs to 514 residues: 2,3-bisphosphoglycerate-independent phosphoglycerate mutase (514 aa).

2 residues coordinate Mn(2+): aspartate 14 and serine 64. Serine 64 functions as the Phosphoserine intermediate in the catalytic mechanism. Residues histidine 125, 155–156 (RD), arginine 187, arginine 193, 263–266 (RADR), and lysine 336 each bind substrate. 5 residues coordinate Mn(2+): aspartate 403, histidine 407, aspartate 444, histidine 445, and histidine 463.

The protein belongs to the BPG-independent phosphoglycerate mutase family. Monomer. Mn(2+) serves as cofactor.

The catalysed reaction is (2R)-2-phosphoglycerate = (2R)-3-phosphoglycerate. The protein operates within carbohydrate degradation; glycolysis; pyruvate from D-glyceraldehyde 3-phosphate: step 3/5. Catalyzes the interconversion of 2-phosphoglycerate and 3-phosphoglycerate. This Shewanella sediminis (strain HAW-EB3) protein is 2,3-bisphosphoglycerate-independent phosphoglycerate mutase.